Reading from the N-terminus, the 480-residue chain is Acetylxylan esterase (480 aa).

Positions 1–19 (MNRKLFMTGLLMLAMTMQA) are cleaved as a signal peptide.

Belongs to the AB hydrolase superfamily.

It catalyses the reaction Deacetylation of xylans and xylo-oligosaccharides.. Its pathway is glycan degradation; xylan degradation. Functionally, involved in degradation of plant cell wall polysaccharides. Is an acetyl esterase with broad substrate specificity, releasing acetic acid from acetylated xylo-oligosaccharides and acetylated xylan as well as xylose-tetraacetate, 4-O-methylumbelliferyl acetate, glucose-pentaacetate, and cephalosporin C. Appears to have greater activity on oligosaccharides than on polymeric substrates. Is also able to release acetic acid from xylo-oligosaccharides with 4-O-methylglucuronic acid side groups proximally located to O-acetyl esters. Preferentially targets xylo-oligosaccharides possessing three or more O-acetyl groups, but following their depletion it is active on the less acetylated portion of the substrate. The polypeptide is Acetylxylan esterase (Xylanibacter ruminicola (strain ATCC 19189 / DSM 19721 / CIP 105475 / JCM 8958 / 23) (Prevotella ruminicola)).